A 295-amino-acid chain; its full sequence is Ectoine dioxygenase (295 aa).

Glutamine 129 is a binding site for L-ectoine. 2-oxoglutarate is bound at residue lysine 135. Fe cation is bound by residues histidine 146, aspartate 148, and histidine 247.

This sequence belongs to the PhyH family. EctD subfamily. In terms of assembly, homodimer. The cofactor is Fe(2+).

The enzyme catalyses L-ectoine + 2-oxoglutarate + O2 = 5-hydroxyectoine + succinate + CO2. In terms of biological role, involved in the biosynthesis of 5-hydroxyectoine, called compatible solute, which helps organisms to survive extreme osmotic stress by acting as a highly soluble organic osmolyte. Catalyzes the 2-oxoglutarate-dependent selective hydroxylation of L-ectoine to yield (4S,5S)-5-hydroxyectoine. In Streptomyces avermitilis (strain ATCC 31267 / DSM 46492 / JCM 5070 / NBRC 14893 / NCIMB 12804 / NRRL 8165 / MA-4680), this protein is Ectoine dioxygenase.